A 345-amino-acid chain; its full sequence is Phosphate acyltransferase (345 aa).

This sequence belongs to the PlsX family. In terms of assembly, homodimer. Probably interacts with PlsY.

It is found in the cytoplasm. It carries out the reaction a fatty acyl-[ACP] + phosphate = an acyl phosphate + holo-[ACP]. Its pathway is lipid metabolism; phospholipid metabolism. Catalyzes the reversible formation of acyl-phosphate (acyl-PO(4)) from acyl-[acyl-carrier-protein] (acyl-ACP). This enzyme utilizes acyl-ACP as fatty acyl donor, but not acyl-CoA. This chain is Phosphate acyltransferase, found in Wolbachia pipientis subsp. Culex pipiens (strain wPip).